The sequence spans 280 residues: Merozoite surface protein 2 (280 aa).

Positions 1-20 (MKVIKTLSIINFFIFVTFNI) are cleaved as a signal peptide. 2 N-linked (GlcNAc...) asparagine glycosylation sites follow: Asn22 and Asn36. Residues 44–206 (ANEGSNTKSV…PQTAENENPA (163 aa)) form a polymorphic region region. The tract at residues 47-242 (GSNTKSVGAN…SQKECTDGNK (196 aa)) is disordered. Positions 51-74 (KSVGANAPKADTIASGSQSSTNSA) are 5 X 12 AA tandem repeats of P-P-I-T-T-T-E-S-N-S-R-S. The span at 64 to 98 (ASGSQSSTNSASTSTTNNGESQTTTPTAADTPTAT) shows a compositional bias: low complexity. The span at 99–149 (ESNSRSPPITTTESNSRSPPITTTESNSRSPPITTTESNSRSPPITTTESN) shows a compositional bias: polar residues. Tandem repeats lie at residues 105 to 116 (PPITTTESNSRS), 117 to 128 (PPITTTESNSRS), 129 to 140 (PPITTTESNSRS), and 141 to 152 (PPITTTESNSRS). A compositionally biased stretch (low complexity) spans 150-163 (SRSPPITTTESSSS). One copy of the 5; partial repeat lies at 153 to 160 (PPITTTES). An N-linked (GlcNAc...) asparagine glycan is attached at Asn168. Residues 170 to 182 (TDGKGEESEKQNE) show a composition bias toward basic and acidic residues. 2 N-linked (GlcNAc...) asparagine glycosylation sites follow: Asn184 and Asn229. Residues 233-242 (SQKECTDGNK) show a composition bias toward basic and acidic residues. An intrachain disulfide couples Cys237 to Cys245. Asn253 and Asn254 each carry an N-linked (GlcNAc...) asparagine glycan. Asn254 carries the GPI-anchor amidated asparagine lipid modification. A propeptide spans 255–280 (SSNIASINKFVVLISATLVLSFAIFI) (removed in mature form).

The protein resides in the cell membrane. May play a role in the merozoite attachment to the erythrocyte. The protein is Merozoite surface protein 2 of Plasmodium falciparum (isolate K1 / Thailand).